The primary structure comprises 279 residues: Dehydrogenase/reductase SDR family member 4 (279 aa).

37–61 provides a ligand contact to NADP(+); that stretch reads LVTASTDGIGFAIARRLAEDGAHVV. Residue Lys93 is modified to N6-acetyllysine; alternate. Lys93 is modified (N6-succinyllysine; alternate). Lys106 is modified (N6-acetyllysine). Ser170 provides a ligand contact to substrate. The active-site Proton acceptor is the Tyr183. Lys187 serves as a coordination point for NADP(+). The residue at position 217 (Lys217) is an N6-acetyllysine; alternate. Lys217 bears the N6-succinyllysine; alternate mark. Phosphoserine is present on Ser221. 2 positions are modified to N6-succinyllysine: Lys228 and Lys235. A Peroxisomal targeting signal motif is present at residues 277 to 279; that stretch reads SRL.

The protein belongs to the short-chain dehydrogenases/reductases (SDR) family. Homotetramer.

The protein resides in the peroxisome. It carries out the reaction a secondary alcohol + NADP(+) = a ketone + NADPH + H(+). It catalyses the reaction 3alpha-hydroxy-5beta-pregnan-20-one + NADP(+) = 5beta-pregnan-3,20-dione + NADPH + H(+). The catalysed reaction is 5beta-dihydrotestosterone + NADPH + H(+) = 5beta-androstane-3alpha,17beta-diol + NADP(+). The enzyme catalyses all-trans-retinol + NADP(+) = all-trans-retinal + NADPH + H(+). It carries out the reaction isatin + NADPH + H(+) = 3-hydroxyindolin-2-one + NADP(+). Its function is as follows. NADPH-dependent oxidoreductase which catalyzes the reduction of a variety of compounds bearing carbonyl groups including ketosteroids, alpha-dicarbonyl compounds, aldehydes, aromatic ketones and quinones. Reduces all-trans-retinal and 9-cis retinal. Reduces 3-ketosteroids and benzil into 3alpha-hydroxysteroids and S-benzoin, respectively, in contrast to the stereoselectivity of primates DHRS4s which produce 3beta-hydroxysteroids and R-benzoin. In the reverse reaction, catalyzes the NADP-dependent oxidation of 3alpha-hydroxysteroids and alcohol, but with much lower efficiency. Involved in the metabolism of 3alpha-hydroxysteroids, retinoid, isatin and xenobiotic carbonyl compounds. The polypeptide is Dehydrogenase/reductase SDR family member 4 (Mus musculus (Mouse)).